A 166-amino-acid polypeptide reads, in one-letter code: Putative 4-hydroxy-4-methyl-2-oxoglutarate aldolase (166 aa).

Residues 74–77 (GDQI) and Arg96 contribute to the substrate site. Asp97 contributes to the a divalent metal cation binding site.

The protein belongs to the class II aldolase/RraA-like family. As to quaternary structure, homotrimer. It depends on a divalent metal cation as a cofactor.

It catalyses the reaction 4-hydroxy-4-methyl-2-oxoglutarate = 2 pyruvate. It carries out the reaction oxaloacetate + H(+) = pyruvate + CO2. Its function is as follows. Catalyzes the aldol cleavage of 4-hydroxy-4-methyl-2-oxoglutarate (HMG) into 2 molecules of pyruvate. Also contains a secondary oxaloacetate (OAA) decarboxylase activity due to the common pyruvate enolate transition state formed following C-C bond cleavage in the retro-aldol and decarboxylation reactions. This is Putative 4-hydroxy-4-methyl-2-oxoglutarate aldolase from Xanthomonas campestris pv. campestris (strain 8004).